Reading from the N-terminus, the 72-residue chain is DNA-directed RNA polymerase subunit omega (72 aa).

This sequence belongs to the RNA polymerase subunit omega family. As to quaternary structure, the RNAP catalytic core consists of 2 alpha, 1 beta, 1 beta' and 1 omega subunit. When a sigma factor is associated with the core the holoenzyme is formed, which can initiate transcription.

The catalysed reaction is RNA(n) + a ribonucleoside 5'-triphosphate = RNA(n+1) + diphosphate. Functionally, promotes RNA polymerase assembly. Latches the N- and C-terminal regions of the beta' subunit thereby facilitating its interaction with the beta and alpha subunits. This chain is DNA-directed RNA polymerase subunit omega, found in Petrotoga mobilis (strain DSM 10674 / SJ95).